A 57-amino-acid chain; its full sequence is Phosphatase RapH inhibitor (57 aa).

Propeptides lie at residues 1-34 (MPIKKKVMMCLAVTLVFGSMSFPTLTNSGGFKES) and 41-57 (YIDHSPYKLSDQKKALS). A disordered region spans residues 26–57 (TNSGGFKESTDRNTTYIDHSPYKLSDQKKALS).

Belongs to the Phr family. Post-translationally, contains a predicted signal peptide cleavage site in the N-terminal region, however the propeptide is probably only subject to processing events at the ends of the mature peptide.

It is found in the secreted. The protein resides in the cytoplasm. Its function is as follows. Signaling molecule involved the regulation of both sporulation and competence. Secreted during production, but the mature peptide acts intracellularly, indicating that it needs to be imported into the cell to function. Acts by inhibiting RapH activity. Can inhibit both RapH activities, the dephosphorylation of Spo0F and the sequestration of ComA. This chain is Phosphatase RapH inhibitor (phrH), found in Bacillus subtilis (strain 168).